The primary structure comprises 172 residues: S-ribosylhomocysteine lyase (172 aa).

His-54, His-58, and Cys-128 together coordinate Fe cation.

It belongs to the LuxS family. As to quaternary structure, homodimer. Requires Fe cation as cofactor.

The enzyme catalyses S-(5-deoxy-D-ribos-5-yl)-L-homocysteine = (S)-4,5-dihydroxypentane-2,3-dione + L-homocysteine. Involved in the synthesis of autoinducer 2 (AI-2) which is secreted by bacteria and is used to communicate both the cell density and the metabolic potential of the environment. The regulation of gene expression in response to changes in cell density is called quorum sensing. Catalyzes the transformation of S-ribosylhomocysteine (RHC) to homocysteine (HC) and 4,5-dihydroxy-2,3-pentadione (DPD). This chain is S-ribosylhomocysteine lyase, found in Vibrio parahaemolyticus serotype O3:K6 (strain RIMD 2210633).